The chain runs to 203 residues: Outer-membrane lipoprotein carrier protein (203 aa).

The signal sequence occupies residues 1 to 21; the sequence is MKKQLMTSCLFAAVLAAPAFA.

This sequence belongs to the LolA family. As to quaternary structure, monomer.

The protein resides in the periplasm. Functionally, participates in the translocation of lipoproteins from the inner membrane to the outer membrane. Only forms a complex with a lipoprotein if the residue after the N-terminal Cys is not an aspartate (The Asp acts as a targeting signal to indicate that the lipoprotein should stay in the inner membrane). This is Outer-membrane lipoprotein carrier protein from Sodalis glossinidius (strain morsitans).